The sequence spans 597 residues: Arginine--tRNA ligase (597 aa).

The 'HIGH' region signature appears at 125–135 (PNTNKPLHLGH).

Belongs to the class-I aminoacyl-tRNA synthetase family. As to quaternary structure, monomer.

The protein resides in the cytoplasm. The enzyme catalyses tRNA(Arg) + L-arginine + ATP = L-arginyl-tRNA(Arg) + AMP + diphosphate. This is Arginine--tRNA ligase from Bacteroides fragilis (strain YCH46).